The chain runs to 120 residues: Ribosome-binding factor A (120 aa).

This sequence belongs to the RbfA family. As to quaternary structure, monomer. Binds 30S ribosomal subunits, but not 50S ribosomal subunits or 70S ribosomes.

The protein resides in the cytoplasm. Its function is as follows. One of several proteins that assist in the late maturation steps of the functional core of the 30S ribosomal subunit. Associates with free 30S ribosomal subunits (but not with 30S subunits that are part of 70S ribosomes or polysomes). Required for efficient processing of 16S rRNA. May interact with the 5'-terminal helix region of 16S rRNA. The polypeptide is Ribosome-binding factor A (Clostridium botulinum (strain Loch Maree / Type A3)).